The following is a 430-amino-acid chain: Probable sugar isomerase R00627 (430 aa).

Residues histidine 257, aspartate 289, and aspartate 291 each coordinate Mn(2+).

Belongs to the rhamnose isomerase family. It depends on Mn(2+) as a cofactor.

This is Probable sugar isomerase R00627 from Rhizobium meliloti (strain 1021) (Ensifer meliloti).